We begin with the raw amino-acid sequence, 307 residues long: MVSSKQTQLKKGKQPSWIEMYLPKEVRPYAHLARLDKPIGSWLLAWPAFWSVALAADLESLPKMLAIFGWWAVWIRGAGCTINDYFDRNFDKKVERTKSRPLASGAVSPAQGLWWLAFQLFIGLGVLYQFNVLTLALAIVHVPFVFAYPLMKRITYWPQAFLGVMISWGALLGSSALKGSVVPSIAYPLYISSFFWTLVYDTIYAHQDKVDDAKAGIKSTALRFGDATKMWISWFGVGCIAALVIGGLILNIGLPYYVFVAIATGQLVWQIFTVDLLSPLDCGKKFVSNQWFGAIIFTGILLGRLFP.

A run of 8 helical transmembrane segments spans residues 38–58 (PIGSWLLAWPAFWSVALAADL), 62–82 (PKMLAIFGWWAVWIRGAGCTI), 120–140 (LFIGLGVLYQFNVLTLALAIV), 154–174 (ITYWPQAFLGVMISWGALLGS), 179–199 (GSVVPSIAYPLYISSFFWTLV), 230–250 (MWISWFGVGCIAALVIGGLIL), 252–272 (IGLPYYVFVAIATGQLVWQIF), and 286–306 (FVSNQWFGAIIFTGILLGRLF).

The protein belongs to the UbiA prenyltransferase family. Requires Mg(2+) as cofactor. In terms of tissue distribution, expressed only in roots.

Its subcellular location is the endoplasmic reticulum membrane. It catalyses the reaction 4-hydroxybenzoate + (2E)-geranyl diphosphate = 3-geranyl-4-hydroxybenzoate + diphosphate. In terms of biological role, prenyltransferase involved in the biosynthesis of shikonin, a naphthoquinone secondary metabolite. Could accept only geranyl diphosphate and not dimethylallyl diphosphate, farnesyl diphosphate, or geranylgeranyl diphosphate as substrate. In Lithospermum erythrorhizon (Purple gromwell), this protein is 4-hydroxybenzoate geranyltransferase 1 (PGT-1).